An 884-amino-acid chain; its full sequence is Alanine--tRNA ligase (884 aa).

Residues H572, H576, C673, and H677 each coordinate Zn(2+).

The protein belongs to the class-II aminoacyl-tRNA synthetase family. Zn(2+) is required as a cofactor.

The protein localises to the cytoplasm. It carries out the reaction tRNA(Ala) + L-alanine + ATP = L-alanyl-tRNA(Ala) + AMP + diphosphate. Catalyzes the attachment of alanine to tRNA(Ala) in a two-step reaction: alanine is first activated by ATP to form Ala-AMP and then transferred to the acceptor end of tRNA(Ala). Also edits incorrectly charged Ser-tRNA(Ala) and Gly-tRNA(Ala) via its editing domain. In Xylella fastidiosa (strain M12), this protein is Alanine--tRNA ligase.